A 1703-amino-acid polypeptide reads, in one-letter code: MSSVSEVNADIRDFLMSINLEQYLLHFREFGFYTVRDCTSINDSVLHQIGISPTGHRRRILKQLQMIFSKMQDFPIYANVHKAKNGSTTKEQQHSDPSSSTHTGIECSDSITVHRPGPAPSEMVTTSTLSEGNCQSPKSHDKLCLSSHDLLCPEEELHQNVDSSKDSLFGGVNVKIDPLITKRAVEYTAGEEHTEKGNLTSEDSSKALSTNTECLPSGDCPTSGTHSGNGTNGVLESFPPTPFFQFQGEMVVNELYVPSSPVHGPMRSRSKLVSRPSRSFLLRHRPVPEIPGSTKSIPGSYFRDRRSNTTSAGKSLTLKNSNEDNSTSIFPYGETFLFQRLESSKKRSIKNEFWPHENTVKEEAATTRNSILTQSSIYDNRKEKVSEDKVEDIWIPREDKNNLAQDSASESEYSTVEECFQSLRRKNSKASKSRTQKAFYLDPFNRHSYPLSSTSGNTEPSSTISNAISPYACFYGSSAAKEKCGWLDKLSPQGKRMFQKRWVKFDGLSISHYNNDREMYSKGIIPLTAISTVRAQGDNKFEIVTTQRTFVFRVEKEEERNDWISILLSALKSPSLASQLQAAVAPEKCGYLELRGYKAKIFTVLRGNSVWLCKNEQDFKSGLGITIIPMNVANVKQVDRAVKQSFEIITPYRSFSFTADSEREKQEWIEAVQQSIAETLSDYEVAEKIWFNESNRSCADCKAPDPDWASINLCVVICKKCAGQHRSLGPKDCKVRSLKMDASIWSNELIELFIVIGNKRANDFWAGNLQKDEELQVDSPVEKRKNFITQKYKEGKFRKTLLASLTKEELNKALCAAVVKPDVLETMALLFSGADVMCATGDPVHSTPYLLAKKAGQSLQMEFLYHNKFSDFPQYDAHFEGGSSQDAAQSSFLCDFLYQTAAAASRVSSEKKLLEDTNKKWCVLEGGFLSYYENDRCTTPNGTINISEVICLAVHKEDFYLNTGPIFVFEIYLPSERVFLFGAETSQIQRKWTETIAKRFVPFVAENLTEADYDLIGQLFYKDCHALDQWRKGWFAMDKSSLCFCLQTQEAQEERMNLRRLQELTISTMVQNGEKVDVLLLVEKGRTLYIHGHTKLDFTVWHTAIEKAAGTDGNALQDQQLCKNDVPIIVNSCIAFVTQYGLGCKYIYQKDGDPLHISELLESFKKDARSVKLRAGKHQLEDVTGVLKSFLSDIDDALLTKELYPYWVSALDTQDEKERTSKYRAFIRSLPGVNRATLAALIEHLYRVQKCSEINHMNAHNLAMVFSSCLFQTKGQTSEEVNVIEDLINNYVEIFEVKEDQVKQMDIENSFITKWKDTQVSQAGDLLIEVFVERKEPDCSIIIRISPVMEAEELTNDILAIKNIIPMKGDIWATFEVIENEELERPLHYTENVLEQVLQWSSLAEPGSAYLVVKRFLTVDSIKQCREKSIKEGILKLKEEPSKILSGNKFQDRCVVLRDGHLFIYKDPKSSKHDKMFPLRAMKFYLGVKKKMKPPTSWGLTVYSEKHHWHLCCDSLQAQMEWMASIFIAQHENDIWPPAGKERKRSITKNPKIGGLPLIPIQHERNATQARKNIETARAELERLRLSEKHDPRDFTDSSLKDRASLIAHCLEHKDEKLRNRARKHRSFNCLEDTEAEGPHGLPKAYKGPKTLKKTEERNSKATLDADPKLPSKVIEELSVVLQRSRPLHKELPDEQTLQKEVK.

One can recognise an SAM domain in the interval 6-70; sequence EVNADIRDFL…LKQLQMIFSK (65 aa). Tyrosine 77 is modified (phosphotyrosine). 3 disordered regions span residues 84-132, 191-232, and 286-319; these read KNGS…LSEG, EEHT…NGTN, and PVPE…LTLK. 3 stretches are compositionally biased toward polar residues: residues 85 to 103, 123 to 132, and 197 to 214; these read NGST…STHT, MVTTSTLSEG, and GNLT…NTEC. Low complexity predominate over residues 222-232; sequence TSGTHSGNGTN. The span at 308-319 shows a compositional bias: polar residues; the sequence is NTTSAGKSLTLK. PH domains lie at 480 to 572 and 585 to 677; these read AKEK…SALK and APEK…QSIA. Residues 674 to 809 form the Arf-GAP domain; that stretch reads QSIAETLSDY…TLLASLTKEE (136 aa). The C4-type zinc-finger motif lies at 698-721; it reads CADCKAPDPDWASINLCVVICKKC. PH domains follow at residues 899–1001 and 1012–1110; these read QTAA…KRFV and DYDL…KAAG. The Rho-GAP domain maps to 1114-1295; sequence NALQDQQLCK…DLINNYVEIF (182 aa). The 95-residue stretch at 1324–1418 folds into the Ras-associating domain; that stretch reads GDLLIEVFVE…AYLVVKRFLT (95 aa). One can recognise a PH 5 domain in the interval 1428–1531; it reads KSIKEGILKL…WMASIFIAQH (104 aa). Serine 1627 bears the Phosphoserine mark. 2 disordered regions span residues 1633-1670 and 1684-1703; these read DTEA…DPKL and RSRP…KEVK. Composition is skewed to basic and acidic residues over residues 1653-1670 and 1688-1703; these read KKTE…DPKL and LHKE…KEVK.

The protein resides in the cytoplasm. Functionally, phosphatidylinositol 3,4,5-trisphosphate-dependent GTPase-activating protein that modulates actin cytoskeleton remodeling by regulating ARF and RHO family members. Is activated by phosphatidylinositol 3,4,5-trisphosphate (PtdIns(3,4,5)P3) binding. Can be activated by phosphatidylinositol 3,4-bisphosphate (PtdIns(3,4,5)P2) binding, albeit with lower efficiency. This chain is Arf-GAP with Rho-GAP domain, ANK repeat and PH domain-containing protein 2 (Arap2), found in Mus musculus (Mouse).